The chain runs to 1163 residues: Integrin alpha-X (1163 aa).

Residues 1 to 19 (MTRTRAALLLFTALATSLG) form the signal peptide. Residues 20-1107 (FNLDTEELTA…EKYKVHNPTP (1088 aa)) lie on the Extracellular side of the membrane. FG-GAP repeat units lie at residues 23 to 78 (DTEE…ACEP) and 79 to 138 (IGLQ…TQRL). Asn61 carries N-linked (GlcNAc...) asparagine glycosylation. A disulfide bond links Cys69 and Cys76. N-linked (GlcNAc...) asparagine glycosylation is present at Asn89. 2 cysteine pairs are disulfide-bonded: Cys108-Cys126 and Cys116-Cys145. Asp157, Ser159, Ser161, and Asp259 together coordinate Mg(2+). The VWFA domain occupies 165-339 (RNFATMMNFV…KEKIFAIEGT (175 aa)). 5 FG-GAP repeats span residues 340–391 (ETTS…PTFI), 392–443 (NMSQ…SRQW), 444–504 (RMKA…WRRW), 507–565 (DAVL…PSIS), and 570–630 (QRIA…FIPA). N-linked (GlcNAc...) asparagine glycosylation occurs at Asn392. Residues Asp466, Asp468, Asp470, and Asp474 each coordinate Ca(2+). Cysteines 495 and 506 form a disulfide. Ca(2+) is bound by residues Asp530, Asn532, Asp534, Asp538, Asp593, Asp597, and Asp601. 2 disulfide bridges follow: Cys639–Cys722 and Cys655–Cys712. Asn697 and Asn735 each carry an N-linked (GlcNAc...) asparagine glycan. 2 disulfides stabilise this stretch: Cys771–Cys777 and Cys848–Cys863. N-linked (GlcNAc...) asparagine glycosylation is found at Asn899 and Asn939. Disulfide bonds link Cys998-Cys1022 and Cys1027-Cys1032. Residue Asn1050 is glycosylated (N-linked (GlcNAc...) asparagine). Residues 1108–1128 (LIVGSSIGGLLLLALITAVLY) form a helical membrane-spanning segment. The Cytoplasmic segment spans residues 1129-1163 (KVGFFKRQYKEMMEEANGQIAPENGTQTPSPPSEK). Residues 1131–1135 (GFFKR) carry the GFFKR motif motif.

This sequence belongs to the integrin alpha chain family. As to quaternary structure, heterodimer of an alpha and a beta subunit. Alpha-X associates with beta-2. As to expression, predominantly expressed in monocytes and granulocytes.

It is found in the membrane. In terms of biological role, integrin alpha-X/beta-2 is a receptor for fibrinogen. It recognizes the sequence G-P-R in fibrinogen. It mediates cell-cell interaction during inflammatory responses. It is especially important in monocyte adhesion and chemotaxis. This Homo sapiens (Human) protein is Integrin alpha-X (ITGAX).